We begin with the raw amino-acid sequence, 427 residues long: Gamma-glutamyl phosphate reductase (427 aa).

It belongs to the gamma-glutamyl phosphate reductase family.

Its subcellular location is the cytoplasm. The enzyme catalyses L-glutamate 5-semialdehyde + phosphate + NADP(+) = L-glutamyl 5-phosphate + NADPH + H(+). The protein operates within amino-acid biosynthesis; L-proline biosynthesis; L-glutamate 5-semialdehyde from L-glutamate: step 2/2. In terms of biological role, catalyzes the NADPH-dependent reduction of L-glutamate 5-phosphate into L-glutamate 5-semialdehyde and phosphate. The product spontaneously undergoes cyclization to form 1-pyrroline-5-carboxylate. This Brucella anthropi (strain ATCC 49188 / DSM 6882 / CCUG 24695 / JCM 21032 / LMG 3331 / NBRC 15819 / NCTC 12168 / Alc 37) (Ochrobactrum anthropi) protein is Gamma-glutamyl phosphate reductase.